The chain runs to 1042 residues: MDKILEGLVSSSHPLPLKRVIVRKVVESAEHWLDEAQCEAMFDLTTRLILEGQDPFQRQVGHQVLEAYARYHRPEFESFFNKTFVLGLLHQGYHSLDRKDVAILDYIHNGLKLIMSCPSVLDLFSLLQVEVLRMVCERPEPQLCARLSDLLTDFVQCIPKGKLSITFCQQLVRTIGHFQCVSTQERELREYVSQVTKVSNLLQNIWKAEPATLLPSLQEVFASISSTDASFEPSVALASLVQHIPLQMITVLIRSLTTDPNVKDASMTQALCRMIDWLSWPLAQHVDTWVIALLKGLAAVQKFTILIDVTLLKIELVFNRLWFPLVRPGALAVLSHMLLSFQHSPEAFHLIVPHVVNLVHSFKNDGLPSSTAFLVQLTELIHCMMYHYSGFPDLYEPILEAIKDFPKPSEEKIKLILNQSAWTSQSNSLASCLSRLSGKSETGKTGLINLGNTCYMNSVIQALFMATDFRRQVLSLNLNGCNSLMKKLQHLFAFLAHTQREAYAPRIFFEASRPPWFTPRSQQDCSEYLRFLLDRLHEEEKILKVQASHKPSEILECSETSLQEVASKAAVLTETPRTSDGEKTLIEKMFGGKLRTHIRCLNCRSTSQKVEAFTDLSLAFCPSSSLENMSVQDPASSPSIQDGGLMQASVPGPSEEPVVYNPTTAAFICDSLVNEKTIGSPPNEFYCSENTSVPNESNKILVNKDVPQKPGGETTPSVTDLLNYFLAPEILTGDNQYYCENCASLQNAEKTMQITEEPEYLILTLLRFSYDQKYHVRRKILDNVSLPLVLELPVKRITSFSSLSESWSVDVDFTDLSENLAKKLKPSGTDEASCTKLVPYLLSSVVVHSGISSESGHYYSYARNITSTDSSYQMYHQSEALALASSQSHLLGRDSPSAVFEQDLENKEMSKEWFLFNDSRVTFTSFQSVQKITSRFPKDTAYVLLYKKQHSTNGLSGNNPTSGLWINGDPPLQKELMDAITKDNKLYLQEQELNARARALQAASASCSFRPNGFDDNDPPGSCGPTGGGGGGGFNTVGRLVF.

Residues 445-949 form the USP domain; the sequence is TGLINLGNTC…TAYVLLYKKQ (505 aa). Catalysis depends on Cys454, which acts as the Nucleophile. Residue His857 is the Proton acceptor of the active site.

The protein belongs to the peptidase C19 family. In terms of assembly, interacts with isoform 1 of FBXW7; this interaction prevents FBXW7-mediated degradation of MYC. Highly expressed in skeletal muscle. Expressed in adrenal gland.

It localises to the cytoplasm. The protein localises to the nucleus. The catalysed reaction is Thiol-dependent hydrolysis of ester, thioester, amide, peptide and isopeptide bonds formed by the C-terminal Gly of ubiquitin (a 76-residue protein attached to proteins as an intracellular targeting signal).. In terms of biological role, deubiquitinating enzyme that plays a role in various cellular processes, including DNA repair, cell cycle regulation, and immune response. Plays a role in the inhibition of type I interferon signaling by mediating the 'Lys-33' to 'Lys-48' ubiquitination transition of TBK1 leading to its degradation. Cleaves the ubiquitin chain from the histone demethylase LSD1/KDM1A and prevents it from degradation by the 26S proteasome, thus maintaining LSD1 protein level in cells. Plays a role in the DNA damage response by regulating the deacetylase activity of HDAC1. Mechanistically, removes the 'Lys-63'-linked ubiquitin chain promoting the deacetylase activity of HDAC1 in response to DNA damage. Also acts as a specific deubiquitinase of histone deacetylase 3/HDAC3 and cleaves its 'Lys-63'-linked ubiquitin chains to lower its histone deacetylase activity. Regulates MYC levels and cell proliferation via antagonizing ubiquitin E3 ligase FBXW7 thereby preventing MYC 'Lys-48'-linked ubiquitination and degradation. Participates in antiviral response by removing both 'Lys-48'-linked and 'Lys-63'-linked polyubiquitination of Zika virus envelope protein E. Constitutively associated with IL-33R/IL1RL1, deconjugates its 'Lys-27'-linked polyubiquitination resulting in its autophagic degradation. The sequence is that of Ubiquitin carboxyl-terminal hydrolase 38 (USP38) from Homo sapiens (Human).